We begin with the raw amino-acid sequence, 256 residues long: Type III pantothenate kinase (256 aa).

6 to 13 (DAGNSRIK) contributes to the ATP binding site. Substrate contacts are provided by residues tyrosine 90 and 97–100 (GSDR). Aspartate 99 functions as the Proton acceptor in the catalytic mechanism. Threonine 123 serves as a coordination point for ATP. Threonine 187 contacts substrate.

The protein belongs to the type III pantothenate kinase family. As to quaternary structure, homodimer. The cofactor is NH4(+). Requires K(+) as cofactor.

It is found in the cytoplasm. The catalysed reaction is (R)-pantothenate + ATP = (R)-4'-phosphopantothenate + ADP + H(+). It functions in the pathway cofactor biosynthesis; coenzyme A biosynthesis; CoA from (R)-pantothenate: step 1/5. In terms of biological role, catalyzes the phosphorylation of pantothenate (Pan), the first step in CoA biosynthesis. This chain is Type III pantothenate kinase, found in Burkholderia mallei (strain ATCC 23344).